The following is a 553-amino-acid chain: Probable malate:quinone oxidoreductase (553 aa).

A disordered region spans residues 524-553 (PPPKIDVNTPSQATGTAPARPAKASADMAL).

Belongs to the MQO family. FAD serves as cofactor.

The catalysed reaction is (S)-malate + a quinone = a quinol + oxaloacetate. Its pathway is carbohydrate metabolism; tricarboxylic acid cycle; oxaloacetate from (S)-malate (quinone route): step 1/1. The sequence is that of Probable malate:quinone oxidoreductase from Burkholderia lata (strain ATCC 17760 / DSM 23089 / LMG 22485 / NCIMB 9086 / R18194 / 383).